Consider the following 311-residue polypeptide: tRNA dimethylallyltransferase (311 aa).

11–18 (GPTASGKS) contributes to the ATP binding site. 13–18 (TASGKS) contributes to the substrate binding site. Interaction with substrate tRNA regions lie at residues 36–39 (DSMQ) and 160–164 (QRLIR).

The protein belongs to the IPP transferase family. As to quaternary structure, monomer. Requires Mg(2+) as cofactor.

It carries out the reaction adenosine(37) in tRNA + dimethylallyl diphosphate = N(6)-dimethylallyladenosine(37) in tRNA + diphosphate. Catalyzes the transfer of a dimethylallyl group onto the adenine at position 37 in tRNAs that read codons beginning with uridine, leading to the formation of N6-(dimethylallyl)adenosine (i(6)A). This Rickettsia typhi (strain ATCC VR-144 / Wilmington) protein is tRNA dimethylallyltransferase.